Reading from the N-terminus, the 142-residue chain is Aspartate 1-decarboxylase (142 aa).

Ser-25 (schiff-base intermediate with substrate; via pyruvic acid) is an active-site residue. The residue at position 25 (Ser-25) is a Pyruvic acid (Ser). Thr-57 serves as a coordination point for substrate. Residue Tyr-58 is the Proton donor of the active site. Residue 73 to 75 coordinates substrate; the sequence is GAA.

It belongs to the PanD family. Heterooctamer of four alpha and four beta subunits. Pyruvate serves as cofactor. In terms of processing, is synthesized initially as an inactive proenzyme, which is activated by self-cleavage at a specific serine bond to produce a beta-subunit with a hydroxyl group at its C-terminus and an alpha-subunit with a pyruvoyl group at its N-terminus.

Its subcellular location is the cytoplasm. It catalyses the reaction L-aspartate + H(+) = beta-alanine + CO2. Its pathway is cofactor biosynthesis; (R)-pantothenate biosynthesis; beta-alanine from L-aspartate: step 1/1. In terms of biological role, catalyzes the pyruvoyl-dependent decarboxylation of aspartate to produce beta-alanine. The polypeptide is Aspartate 1-decarboxylase (Mycobacterium leprae (strain Br4923)).